We begin with the raw amino-acid sequence, 314 residues long: tRNA dimethylallyltransferase (314 aa).

11-18 (GPTASGKT) is a binding site for ATP. Position 13–18 (13–18 (TASGKT)) interacts with substrate. 4 interaction with substrate tRNA regions span residues 36–39 (DSAL), 160–164 (QRINR), 241–246 (RCVGYR), and 274–281 (KRQITWLR).

It belongs to the IPP transferase family. In terms of assembly, monomer. Mg(2+) serves as cofactor.

The catalysed reaction is adenosine(37) in tRNA + dimethylallyl diphosphate = N(6)-dimethylallyladenosine(37) in tRNA + diphosphate. Its function is as follows. Catalyzes the transfer of a dimethylallyl group onto the adenine at position 37 in tRNAs that read codons beginning with uridine, leading to the formation of N6-(dimethylallyl)adenosine (i(6)A). The chain is tRNA dimethylallyltransferase from Glaesserella parasuis serovar 5 (strain SH0165) (Haemophilus parasuis).